The chain runs to 517 residues: Cytochrome P450 monooxygenase cdmJ (517 aa).

Residues 15–35 (YMWSLTLFALCLSAILMFPFL) form a helical membrane-spanning segment. Asn-404 carries an N-linked (GlcNAc...) asparagine glycan. Cys-451 is a binding site for heme.

The protein belongs to the cytochrome P450 family. It depends on heme as a cofactor.

It is found in the membrane. It catalyses the reaction 3-hydroxypentacecilide A + NADPH + O2 + H(+) = chrodrimanin F + NADP(+) + H2O. It carries out the reaction chrodrimanin C + NADPH + O2 + H(+) = chrodrimanin H + NADP(+) + H2O. The enzyme catalyses verruculide A + NADPH + O2 + H(+) = chrodrimanin E + NADP(+) + H2O. The catalysed reaction is chrodrimanin T + NADPH + O2 + H(+) = chrodrimanin A + NADP(+) + H2O. The protein operates within secondary metabolite biosynthesis; terpenoid biosynthesis. In terms of biological role, cytochrome P450 monooxygenase; part of the gene cluster that mediates the biosynthesis of chrodrimanin B, a meroterpenoid that acts as a potent blocker of insect GABA-gated chloride channels. The first step of the pathway is the biosynthesis of 6-hydroxymellein by the polyketide synthase cdmE. The prenyltransferase cdmH acts as a 6-hydroxymellein 5-farnesyltransferase and produces the hydrophobic metabolite verruculide C. The FAD-dependent monooxygenase cdmI further converts verruculide C into verruculide B. The terpene cyclase cdmG then produced the pentacyclic molecule 3-hydroxypentacecilide A, the backbone structure of chrodrimanin B, via folding the farnesyl moiety of the substrate into the chair-boat conformation. The short-chain dehydrogenase/reductase cdmF functions as the 3-OH dehydrogenase that oxidizes the C-3 hydroxyl group of 3-hydroxypentacecilide A and produces chrodrimanin C, the dehydrogenated product of 3-hydroxypentacecilide A. The cytochrome P450 monooxygenase cdmJ then accepts both 3-hydroxypentacecilide A and chrodrimanin C and functions as a C-7-beta-hydroxylase to produce respectively chrodrimanin H and chrodrimanin F. The dioxygenase cdmA accepts chrodrimanin H to afford chrodrimanin E, which is further transformed to chrodrimanin A by the dioxygenase cdmD. CdmA can also accept chrodrimanin C as substrate to convert it into verruculide A, which is further converted into chrodrimanin T by cdmD. The last step of the biosynthesis is proposed to be performed by the acetyltransferase cdmC which acetylates chrodrimanin A to yield chrodrimanin B. The pathway may also lead to the production of additional shunt products, including chrodrimanins T and U. This is Cytochrome P450 monooxygenase cdmJ from Talaromyces verruculosus (Penicillium verruculosum).